A 3584-amino-acid chain; its full sequence is D-lysergyl-peptide-synthetase subunit 1 (3584 aa).

Positions 25–44 are disordered; that stretch reads IESINGDKNKSERHTASSSA. Positions 29-39 are enriched in basic and acidic residues; the sequence is NGDKNKSERHT. The interval 307–706 is adenylation (A) domain 1; that stretch reads SCCSRPNSQA…LGRKDDQVKI (400 aa). The 70-residue stretch at 848–917 folds into the Carrier 1 domain; it reads REKLLQALFA…TLREIVIVST (70 aa). The residue at position 880 (serine 880) is an O-(pantetheine 4'-phosphoryl)serine. The segment at 962 to 1353 is condensation (C) domain 1; it reads EDIYPCTHLQ…EHILTQIHSN (392 aa). Residues 1396–1803 form an adenylation (A) domain 2 region; sequence QAKCQAQPDA…RRKDAQVKIR (408 aa). The Carrier 2 domain maps to 1948–2016; that stretch reads TEHEISAIWA…TIRKLALARG (69 aa). Residue serine 1980 is modified to O-(pantetheine 4'-phosphoryl)serine. Residues 2066–2483 form a condensation (C) domain 2 region; it reads ERIYPCSPIQ…ALPVLDEDQM (418 aa). Residues 2508 to 2906 form an adenylation (A) domain 3 region; that stretch reads QCIRCPDSPS…GRNDDQVKVR (399 aa). The region spanning 3041 to 3109 is the Carrier 3 domain; sequence MEAELQQLVG…RLSDLARIVE (69 aa). The residue at position 3073 (serine 3073) is an O-(pantetheine 4'-phosphoryl)serine. The interval 3174–3472 is cyclization (Cyc) domain; that stretch reads LYFSKPMASE…VAKSTTWSSD (299 aa).

It belongs to the NRP synthetase family.

It functions in the pathway alkaloid biosynthesis; ergot alkaloid biosynthesis. In terms of biological role, D-lysergyl-peptide-synthetase subunit 1; part of the gene cluster that mediates the biosynthesis of fungal ergot alkaloid. DmaW catalyzes the first step of ergot alkaloid biosynthesis by condensing dimethylallyl diphosphate (DMAP) and tryptophan to form 4-dimethylallyl-L-tryptophan. The second step is catalyzed by the methyltransferase easF that methylates 4-dimethylallyl-L-tryptophan in the presence of S-adenosyl-L-methionine, resulting in the formation of 4-dimethylallyl-L-abrine. The catalase easC and the FAD-dependent oxidoreductase easE then transform 4-dimethylallyl-L-abrine to chanoclavine-I which is further oxidized by easD in the presence of NAD(+), resulting in the formation of chanoclavine-I aldehyde. Agroclavine dehydrogenase easG then mediates the conversion of chanoclavine-I aldehyde to agroclavine via a non-enzymatic adduct reaction: the substrate is an iminium intermediate that is formed spontaneously from chanoclavine-I aldehyde in the presence of glutathione. The presence of easA is not required to complete this reaction. Further conversion of agroclavine to paspalic acid is a two-step process involving oxidation of agroclavine to elymoclavine and of elymoclavine to paspalic acid, the second step being performed by the elymoclavine oxidase cloA. Paspalic acid is then further converted to D-lysergic acid. Ergopeptines are assembled from D-lysergic acid and three different amino acids by the D-lysergyl-peptide-synthetases composed each of a monomudular and a trimodular nonribosomal peptide synthetase subunit. LpsB and lpsC encode the monomodular subunits responsible for D-lysergic acid activation and incorporation into the ergopeptine backbone. LpsA1 and A2 subunits encode the trimodular nonribosomal peptide synthetase assembling the tripeptide portion of ergopeptines. LpsA1 is responsible for formation of the major ergopeptine, ergotamine, and lpsA2 for alpha-ergocryptine, the minor ergopeptine of the total alkaloid mixture elaborated by C.purpurea. D-lysergyl-tripeptides are assembled by the nonribosomal peptide synthetases and released as N-(D-lysergyl-aminoacyl)-lactams. Cyclolization of the D-lysergyl-tripeptides is performed by the Fe(2+)/2-ketoglutarate-dependent dioxygenase easH which introduces a hydroxyl group into N-(D-lysergyl-aminoacyl)-lactam at alpha-C of the aminoacyl residue followed by spontaneous condensation with the terminal lactam carbonyl group. The polypeptide is D-lysergyl-peptide-synthetase subunit 1 (Claviceps purpurea (strain 20.1) (Ergot fungus)).